A 522-amino-acid polypeptide reads, in one-letter code: Gypsy retrotransposon integrase-like protein 1 (522 aa).

An Integrase catalytic domain is found at Lys-135 to Asn-292. Phosphoserine is present on Ser-502.

Widely expressed. Also found in tumors originating from parathyroid gland, colon, stomach, bladder, uterus and prostate.

This is Gypsy retrotransposon integrase-like protein 1 (GIN1) from Homo sapiens (Human).